An 80-amino-acid polypeptide reads, in one-letter code: Peptide LaIT2 (80 aa).

The first 21 residues, 1–21, serve as a signal peptide directing secretion; that stretch reads MAKHLIVMFLVIMVISSLVDC. In terms of domain architecture, BetaSPN-type CS-alpha/beta spans 49–80; that stretch reads QYGCPIISNMCEDHCRRKKMEGQCDLLDCVCS. 3 disulfides stabilise this stretch: Cys-52–Cys-72, Cys-59–Cys-77, and Cys-63–Cys-79.

Belongs to the long chain scorpion toxin family. Class 2 subfamily. Expressed by the venom gland.

The protein resides in the secreted. Its function is as follows. Dual-function toxin that acts both as an insecticidal and an antimicrobial peptide. May inhibit voltage-gated potassium channels (Kv). This amphipathic peptide causes significant antimicrobial activity against E.coli (MIC=7 uM) but does not show any activity against S.aureus even at high concentration. In vivo, causes paralysis or death to crickets. The chain is Peptide LaIT2 from Liocheles australasiae (Dwarf wood scorpion).